We begin with the raw amino-acid sequence, 266 residues long: Small ribosomal subunit protein uS2 (266 aa).

Positions 227 to 266 (GVSFTEETPSEPIQSDSSEEEEGSLDISDLFEDTDLKEEE) are disordered. Residues 231–240 (TEETPSEPIQ) show a composition bias toward polar residues. The span at 243–266 (SSEEEEGSLDISDLFEDTDLKEEE) shows a compositional bias: acidic residues.

The protein belongs to the universal ribosomal protein uS2 family.

The sequence is that of Small ribosomal subunit protein uS2 from Pseudothermotoga lettingae (strain ATCC BAA-301 / DSM 14385 / NBRC 107922 / TMO) (Thermotoga lettingae).